The following is a 216-amino-acid chain: Probable RNA 2'-phosphotransferase 2 (216 aa).

It belongs to the KptA/TPT1 family.

In terms of biological role, removes the 2'-phosphate from RNA via an intermediate in which the phosphate is ADP-ribosylated by NAD followed by a presumed transesterification to release the RNA and generate ADP-ribose 1''-2''-cyclic phosphate (APPR&gt;P). May function as an ADP-ribosylase. The chain is Probable RNA 2'-phosphotransferase 2 (kptA2) from Archaeoglobus fulgidus (strain ATCC 49558 / DSM 4304 / JCM 9628 / NBRC 100126 / VC-16).